Consider the following 479-residue polypeptide: Phosphatidylinositol 4-kinase type 2-beta (479 aa).

Residues 1–10 show a composition bias toward acidic residues; the sequence is MESGSEEPDE. A disordered region spans residues 1-91; sequence MESGSEEPDE…PRVGAGHTGH (91 aa). A compositionally biased stretch (low complexity) spans 18–34; sequence PALHAGPPAGRAAPGGA. Residues 42-62 show a composition bias toward acidic residues; it reads GLEEEEEGEEDSGPEGDGEEE. The PI3K/PI4K catalytic domain maps to 118 to 449; sequence GVLPERISQG…VQMPRVIVER (332 aa). Residues 124–130 are G-loop; the sequence is ISQGSSG. Positions 131 and 146 each coordinate ATP. The tract at residues 151 to 153 is important for substrate binding; the sequence is EPY. Residues 159 to 172 form an important for interaction with membranes region; sequence KWTKYFHKICCPCC. Residues 255–258 and 269–270 contribute to the ATP site; these read QLFV and RK. The segment at 262-270 is important for interaction with membranes; that stretch reads KEADYWLRK. The tract at residues 299-307 is catalytic loop; the sequence is RNTDRGNDN. Residues 340 to 360 are activation loop; the sequence is AIDNGLAFPFKHPDEWRAYPF. Position 342 (Asp-342) interacts with ATP. The segment at 355–364 is important for interaction with membranes; the sequence is WRAYPFHWAW.

This sequence belongs to the PI3/PI4-kinase family. Type II PI4K subfamily.

The protein localises to the cytoplasm. It is found in the cytosol. The protein resides in the golgi apparatus membrane. Its subcellular location is the endoplasmic reticulum membrane. It localises to the cell membrane. The protein localises to the early endosome membrane. The catalysed reaction is a 1,2-diacyl-sn-glycero-3-phospho-(1D-myo-inositol) + ATP = a 1,2-diacyl-sn-glycero-3-phospho-(1D-myo-inositol 4-phosphate) + ADP + H(+). Its function is as follows. Contributes to the overall PI4-kinase activity of the cell. This contribution may be especially significant in plasma membrane, endosomal and Golgi compartments. The phosphorylation of phosphatidylinositol (PI) to PI4P is the first committed step in the generation of phosphatidylinositol 4,5-bisphosphate (PIP2), a precursor of the second messenger inositol 1,4,5-trisphosphate (InsP3). This is Phosphatidylinositol 4-kinase type 2-beta (PI4K2B) from Gallus gallus (Chicken).